The following is a 67-amino-acid chain: uncharacterized protein (67 aa).

The helical transmembrane segment at 12-34 threads the bilayer; sequence YYYAHQTVCITSTGFALCFVVQA.

It localises to the membrane. This is an uncharacterized protein from Saccharomyces cerevisiae (strain ATCC 204508 / S288c) (Baker's yeast).